A 502-amino-acid polypeptide reads, in one-letter code: ATP synthase subunit alpha (502 aa).

Residue 169–176 (GDRQTGKT) coordinates ATP.

This sequence belongs to the ATPase alpha/beta chains family. F-type ATPases have 2 components, CF(1) - the catalytic core - and CF(0) - the membrane proton channel. CF(1) has five subunits: alpha(3), beta(3), gamma(1), delta(1), epsilon(1). CF(0) has three main subunits: a(1), b(2) and c(9-12). The alpha and beta chains form an alternating ring which encloses part of the gamma chain. CF(1) is attached to CF(0) by a central stalk formed by the gamma and epsilon chains, while a peripheral stalk is formed by the delta and b chains.

The protein localises to the cell inner membrane. The catalysed reaction is ATP + H2O + 4 H(+)(in) = ADP + phosphate + 5 H(+)(out). Its function is as follows. Produces ATP from ADP in the presence of a proton gradient across the membrane. The alpha chain is a regulatory subunit. This Geotalea uraniireducens (strain Rf4) (Geobacter uraniireducens) protein is ATP synthase subunit alpha.